The primary structure comprises 163 residues: CASP-like protein 1C3 (163 aa).

Residues 1 to 6 (MAKIKK) lie on the Cytoplasmic side of the membrane. The helical transmembrane segment at 7 to 27 (IFTNFLRLLALAATVVAIVFM) threads the bilayer. Residues 28 to 52 (VTSHDSAQVLNLTFTVKYSNTPVFK) lie on the Extracellular side of the membrane. A glycan (N-linked (GlcNAc...) asparagine) is linked at asparagine 38. The chain crosses the membrane as a helical span at residues 53-73 (YFVIAEAIAGGYIVISILLSF). Residues 74 to 79 (KSLFWR) lie on the Cytoplasmic side of the membrane. A helical transmembrane segment spans residues 80–100 (LLVILDMVTAVLLTSSISAAL). The Extracellular segment spans residues 101–128 (AIAQVGKKGNTHAGWLPVCEQVPDFCDQ). A helical transmembrane segment spans residues 129-149 (VTIALIAGFAAAIIYFVLLLC). Residues 150 to 163 (SLYVVLSPIFVVTP) lie on the Cytoplasmic side of the membrane.

The protein belongs to the Casparian strip membrane proteins (CASP) family. In terms of assembly, homodimer and heterodimers.

The protein localises to the cell membrane. The polypeptide is CASP-like protein 1C3 (Populus trichocarpa (Western balsam poplar)).